The following is a 79-amino-acid chain: Antimicrobial peptide UyCT1 (79 aa).

Positions 1–23 (MKTQLAFLAITVILMQLFAQTEA) are cleaved as a signal peptide. An Isoleucine amide modification is found at I37. Residues 41–79 (GLRNVDQIADLFDSGLSDADDLFDSGLSDADAKFMKMFM) constitute a propeptide that is removed on maturation.

The protein belongs to the non-disulfide-bridged peptide (NDBP) superfamily. Short antimicrobial peptide (group 4) family. Expressed by the venom gland.

The protein resides in the secreted. It localises to the target cell membrane. Functionally, inhibits the growth of Gram-positive (S.aureus, MIC=15 uM) and Gram-negative bacteria (E.coli, MIC=10 uM and P.aeruginosa, MIC=10 uM). It also shows 26% of hemolysis when 15 uM are tested (81% at 50 uM). In terms of biological role, inhibits the growth of Gram-negative bacteria (E.coli, MIC=25 uM and P.aeruginosa, MIC=40 uM). It also shows 7% of hemolysis when 50 uM are tested. Does not show activity against the Gram-positive bacteria S.aureus. The sequence is that of Antimicrobial peptide UyCT1 from Urodacus yaschenkoi (Inland robust scorpion).